A 279-amino-acid chain; its full sequence is Large ribosomal subunit protein uL2 (279 aa).

Residues 223–279 form a disordered region; that stretch reads PVAMNPVDHPMGGGEGRASGGHPRSRKGLPAKGFKTRSRTKASNKYIVERRKTRKKK. Residues 245–264 are compositionally biased toward basic residues; that stretch reads PRSRKGLPAKGFKTRSRTKA.

This sequence belongs to the universal ribosomal protein uL2 family. In terms of assembly, part of the 50S ribosomal subunit. Forms a bridge to the 30S subunit in the 70S ribosome.

Functionally, one of the primary rRNA binding proteins. Required for association of the 30S and 50S subunits to form the 70S ribosome, for tRNA binding and peptide bond formation. It has been suggested to have peptidyltransferase activity; this is somewhat controversial. Makes several contacts with the 16S rRNA in the 70S ribosome. The protein is Large ribosomal subunit protein uL2 of Christiangramia forsetii (strain DSM 17595 / CGMCC 1.15422 / KT0803) (Gramella forsetii).